Here is a 164-residue protein sequence, read N- to C-terminus: Transcription elongation factor GreA (164 aa).

It belongs to the GreA/GreB family.

Its function is as follows. Necessary for efficient RNA polymerase transcription elongation past template-encoded arresting sites. The arresting sites in DNA have the property of trapping a certain fraction of elongating RNA polymerases that pass through, resulting in locked ternary complexes. Cleavage of the nascent transcript by cleavage factors such as GreA or GreB allows the resumption of elongation from the new 3'terminus. GreA releases sequences of 2 to 3 nucleotides. In Helicobacter pylori (strain J99 / ATCC 700824) (Campylobacter pylori J99), this protein is Transcription elongation factor GreA.